Here is a 269-residue protein sequence, read N- to C-terminus: 3-methyl-2-oxobutanoate hydroxymethyltransferase (269 aa).

Residues Asp-43 and Asp-82 each coordinate Mg(2+). 3-methyl-2-oxobutanoate contacts are provided by residues 43 to 44 (DS), Asp-82, and Lys-110. Position 112 (Glu-112) interacts with Mg(2+). Glu-179 acts as the Proton acceptor in catalysis.

Belongs to the PanB family. Homodecamer; pentamer of dimers. Mg(2+) is required as a cofactor.

The protein localises to the cytoplasm. It carries out the reaction 3-methyl-2-oxobutanoate + (6R)-5,10-methylene-5,6,7,8-tetrahydrofolate + H2O = 2-dehydropantoate + (6S)-5,6,7,8-tetrahydrofolate. It functions in the pathway cofactor biosynthesis; (R)-pantothenate biosynthesis; (R)-pantoate from 3-methyl-2-oxobutanoate: step 1/2. Its function is as follows. Catalyzes the reversible reaction in which hydroxymethyl group from 5,10-methylenetetrahydrofolate is transferred onto alpha-ketoisovalerate to form ketopantoate. The protein is 3-methyl-2-oxobutanoate hydroxymethyltransferase of Acinetobacter baumannii (strain SDF).